We begin with the raw amino-acid sequence, 130 residues long: Small ribosomal subunit protein uS9 (130 aa).

This sequence belongs to the universal ribosomal protein uS9 family.

The polypeptide is Small ribosomal subunit protein uS9 (Neisseria meningitidis serogroup C (strain 053442)).